A 269-amino-acid polypeptide reads, in one-letter code: NAD kinase (269 aa).

The active-site Proton acceptor is the Asp-62. NAD(+)-binding positions include 62–63 (DG), 130–131 (NE), Lys-141, Arg-158, Asp-160, 171–176 (TAYAMS), Ala-195, and Gln-229.

This sequence belongs to the NAD kinase family. The cofactor is a divalent metal cation.

It localises to the cytoplasm. It catalyses the reaction NAD(+) + ATP = ADP + NADP(+) + H(+). Involved in the regulation of the intracellular balance of NAD and NADP, and is a key enzyme in the biosynthesis of NADP. Catalyzes specifically the phosphorylation on 2'-hydroxyl of the adenosine moiety of NAD to yield NADP. The protein is NAD kinase of Methanospirillum hungatei JF-1 (strain ATCC 27890 / DSM 864 / NBRC 100397 / JF-1).